Reading from the N-terminus, the 1987-residue chain is Transcription factor 20 (1987 aa).

Positions 1–22 are enriched in polar residues; the sequence is MQSFREQSSYHGNQQSYPQEVH. Disordered stretches follow at residues 1–79, 96–432, 446–481, 502–816, and 844–891; these read MQSF…QGYQ, DTVA…GNVP, LSPTPSMMPSPNSHAAGFKGFGLEGVPEKRLTDPGL, LLSD…GTAR, and PHWG…SLSE. A compositionally biased stretch (low complexity) spans 51-74; that stretch reads TGSSSSGRRGTAAAAAAMASETSG. The residue at position 59 (Arg-59) is an Omega-N-methylarginine. The span at 121–142 shows a compositional bias: polar residues; sequence QGSSFGNQYASEGHVSQFQAQH. Over residues 163 to 205 the composition is skewed to low complexity; sequence SAQYQQQASSQQQQQQQQQQQQQQQQQQQQVQQLRQQLYQSHQ. Residues 206 to 235 show a composition bias toward polar residues; the sequence is PLPQTTGQPASGSSHLQPMQRPSTLPSSAG. Residues 248–277 show a composition bias toward low complexity; the sequence is QSSASSSSSSSFPSPQRFSQSGQSYDGSYS. The span at 289–311 shows a compositional bias: polar residues; it reads VGSNAQAYGTQSNYSYQPQSMKN. A Glycyl lysine isopeptide (Lys-Gly) (interchain with G-Cter in SUMO2) cross-link involves residue Lys-316. Residues 322 to 354 are compositionally biased toward low complexity; sequence QQGQQQQQQQPQPQQQQPQQQQQQQQQQQHPPQ. Positions 357–377 are enriched in polar residues; the sequence is MQYTNAATKMPLQSQVGQYNQ. A compositionally biased stretch (low complexity) spans 396 to 416; sequence SNPSPAASVVQSPSCSSTPSP. The segment covering 417–432 has biased composition (polar residues); that stretch reads LMQSGENLQCGQGNVP. Positions 446–456 are enriched in low complexity; the sequence is LSPTPSMMPSP. Residues Ser-447 and Ser-458 each carry the phosphoserine modification. Polar residues-rich tracts occupy residues 526–537, 566–576, and 585–605; these read SCTNSEGSSQPE, LSGQSTSSDTT, and AGSSPTQGAQNEAPRLSTSPA. Residues Ser-567, Ser-588, Ser-603, and Ser-612 each carry the phosphoserine modification. Positions 618–627 are enriched in polar residues; it reads TSLSSEGNTK. Position 631 is an N6-acetyllysine (Lys-631). The span at 645–657 shows a compositional bias: basic and acidic residues; it reads RVEKSGGQDKGSQ. The segment covering 666-682 has biased composition (polar residues); it reads RPPSNSGVKEISHTSLP. At Ser-669 the chain carries Phosphoserine. The span at 693-715 shows a compositional bias: low complexity; the sequence is GNKNGDNNSSNHNGEGNGPSSHS. Residues 722–731 are compositionally biased toward polar residues; that stretch reads TGRTEPSKSP. Glycyl lysine isopeptide (Lys-Gly) (interchain with G-Cter in SUMO2) cross-links involve residues Lys-739, Lys-762, Lys-777, Lys-852, Lys-861, and Lys-873. Basic and acidic residues predominate over residues 761–777; that stretch reads EKGDFGSHGERKGRNEK. Ser-900 bears the Phosphoserine mark. Residues Lys-949 and Lys-951 each participate in a glycyl lysine isopeptide (Lys-Gly) (interchain with G-Cter in SUMO2) cross-link. The interval 949 to 1065 is disordered; the sequence is KLKSQSGQIK…GDPHHMNPHM (117 aa). Lys-958 participates in a covalent cross-link: Glycyl lysine isopeptide (Lys-Gly) (interchain with G-Cter in SUMO1); alternate. Lys-958 is covalently cross-linked (Glycyl lysine isopeptide (Lys-Gly) (interchain with G-Cter in SUMO2); alternate). The segment covering 974–989 has biased composition (basic and acidic residues); sequence KSGDHCHPTSIKHETY. Lys-985 is covalently cross-linked (Glycyl lysine isopeptide (Lys-Gly) (interchain with G-Cter in SUMO2)). 2 positions are modified to phosphoserine: Ser-994 and Ser-1033. Lys-1043 is covalently cross-linked (Glycyl lysine isopeptide (Lys-Gly) (interchain with G-Cter in SUMO2)). Omega-N-methylarginine is present on Arg-1052. At Ser-1081 the chain carries Phosphoserine. Residues Lys-1114, Lys-1126, Lys-1165, Lys-1201, Lys-1206, Lys-1211, Lys-1238, Lys-1259, Lys-1295, and Lys-1302 each participate in a glycyl lysine isopeptide (Lys-Gly) (interchain with G-Cter in SUMO2) cross-link. Residues 1136–1372 are disordered; that stretch reads VIAAAQHRQE…SPAKTKILPP (237 aa). Basic and acidic residues predominate over residues 1158–1170; sequence DRVRSPLKNDKDG. Residues 1198–1219 form a leucine-zipper region; it reads LPAKSMELKHSSQKLQESCWDL. Positions 1282 to 1295 match the Nuclear localization signal motif; sequence RRRVRSFISPIPSK. Composition is skewed to basic and acidic residues over residues 1305-1321 and 1332-1346; these read NADDKGRLLHPSKEGAD and HSQDIKSIPKRDSSK. Ser-1333 is subject to Phosphoserine. A Glycyl lysine isopeptide (Lys-Gly) (interchain with G-Cter in SUMO2) cross-link involves residue Lys-1337. Ser-1363 carries the post-translational modification Phosphoserine. A Glycyl lysine isopeptide (Lys-Gly) (interchain with G-Cter in SUMO2) cross-link involves residue Lys-1366. Ser-1389 carries the post-translational modification Phosphoserine. Residues 1415–1434 are disordered; that stretch reads SLKSGPPEGGTVATQEAEME. Glycyl lysine isopeptide (Lys-Gly) (interchain with G-Cter in SUMO2) cross-links involve residues Lys-1417, Lys-1437, Lys-1456, and Lys-1474. The interval 1446–1636 is disordered; that stretch reads SVTNQESNVE…KQAVPIVEPQ (191 aa). Residues 1463–1479 are compositionally biased toward basic and acidic residues; it reads EEWRGSGDDKVKTEAHV. A compositionally biased stretch (polar residues) spans 1481–1501; sequence TASTGKEPSGTMTSTASQKPG. A Glycyl lysine isopeptide (Lys-Gly) (interchain with G-Cter in SUMO2) cross-link involves residue Lys-1538. The residue at position 1550 (Ser-1550) is a Phosphoserine. Lys-1552 participates in a covalent cross-link: Glycyl lysine isopeptide (Lys-Gly) (interchain with G-Cter in SUMO2). Residues 1565–1579 constitute a DNA-binding region (a.T hook); that stretch reads GKKKGRPIGSVNKQK. Over residues 1584 to 1594 the composition is skewed to pro residues; it reads QPPPPPQPPQM. The Nuclear localization signal signature appears at 1604–1628; sequence KPKKQRQRRERRKPGAQPRKRKTKQ. Residues 1606 to 1627 show a composition bias toward basic residues; it reads KKQRQRRERRKPGAQPRKRKTK. A Glycyl lysine isopeptide (Lys-Gly) (interchain with G-Cter in SUMO2) cross-link involves residue Lys-1641. 2 disordered regions span residues 1685–1710 and 1760–1865; these read QTKLVRSRKGQRSLTPPPSSTESKVL and TLPK…GPEL. Phosphoserine is present on Ser-1697. Phosphothreonine is present on residues Thr-1699, Thr-1790, and Thr-1792. The Nuclear localization signal motif lies at 1812 to 1819; it reads RFKRRHRS. Over residues 1850–1859 the composition is skewed to polar residues; the sequence is DTKPSVPTTS. The C2HC pre-PHD-type; degenerate zinc finger occupies 1856–1892; the sequence is PTTSEGGPELELQIPELPLDSNEFWVHEGCILWANGI. A PHD-type zinc finger spans residues 1912 to 1960; that stretch reads MKCSHCQEAGATLGCYNKGCSFRYHYPCAIDADCLLHEENFSVRCPKHK. The segment at 1966–1987 is disordered; it reads PLPPLQNKTAKGSLSTEQSERG. Residues 1971–1987 show a composition bias toward polar residues; it reads QNKTAKGSLSTEQSERG.

In terms of assembly, homodimer. Interacts with RNF4 and JUN. Binds to the regulatory region of MMP3. In terms of tissue distribution, expressed in brain, lung, liver, kidney and testes.

The protein localises to the nucleus. Transcriptional activator that binds to the regulatory region of MMP3 and thereby controls stromelysin expression. It stimulates the activity of various transcriptional activators such as JUN, SP1, PAX6 and ETS1, suggesting a function as a coactivator. The chain is Transcription factor 20 (Tcf20) from Mus musculus (Mouse).